The chain runs to 306 residues: UDP-N-acetylenolpyruvoylglucosamine reductase (306 aa).

Residues 34–198 (VGGPADLLIT…LEVTFKLHNS (165 aa)) enclose the FAD-binding PCMH-type domain. Residue Arg177 is part of the active site. Ser227 (proton donor) is an active-site residue. The active site involves Glu297.

Belongs to the MurB family. FAD serves as cofactor.

It is found in the cytoplasm. It carries out the reaction UDP-N-acetyl-alpha-D-muramate + NADP(+) = UDP-N-acetyl-3-O-(1-carboxyvinyl)-alpha-D-glucosamine + NADPH + H(+). It functions in the pathway cell wall biogenesis; peptidoglycan biosynthesis. Functionally, cell wall formation. The chain is UDP-N-acetylenolpyruvoylglucosamine reductase from Clostridium botulinum (strain ATCC 19397 / Type A).